Consider the following 167-residue polypeptide: CASP-like protein UU1 (167 aa).

The Cytoplasmic portion of the chain corresponds to 1–17; the sequence is MVELESQEAVTVASTAD. Residues 18–38 traverse the membrane as a helical segment; the sequence is IAVDVSLRLLAAATSLASAVV. Topologically, residues 39-54 are extracellular; the sequence is VAANHQQRWGVRVDFT. The chain crosses the membrane as a helical span at residues 55–75; that stretch reads LFQVWIGFVAVNLVCTVYAAA. Over 76–94 the chain is Cytoplasmic; the sequence is TAAAARKAMGRWWLHHADA. Residues 95–115 form a helical membrane-spanning segment; that stretch reads VVVNLEAAATAGAGAIGSIAM. Residues 116–135 lie on the Extracellular side of the membrane; it reads WGNEASGWYAVCRLYRRYCN. The chain crosses the membrane as a helical span at residues 136–156; that stretch reads AGAAALALSLAAVLLLGVACA. The Cytoplasmic segment spans residues 157-167; sequence RSRYPKMPPTT.

Belongs to the Casparian strip membrane proteins (CASP) family. In terms of assembly, homodimer and heterodimers.

It is found in the cell membrane. The polypeptide is CASP-like protein UU1 (Oryza sativa subsp. indica (Rice)).